Reading from the N-terminus, the 637-residue chain is tRNA uridine 5-carboxymethylaminomethyl modification enzyme MnmG (637 aa).

An FAD-binding site is contributed by 18 to 23; sequence GAGHAG. 282–296 is a binding site for NAD(+); the sequence is GPRYCPSIEDKIVRF.

Belongs to the MnmG family. As to quaternary structure, homodimer. Heterotetramer of two MnmE and two MnmG subunits. Requires FAD as cofactor.

The protein resides in the cytoplasm. In terms of biological role, NAD-binding protein involved in the addition of a carboxymethylaminomethyl (cmnm) group at the wobble position (U34) of certain tRNAs, forming tRNA-cmnm(5)s(2)U34. The sequence is that of tRNA uridine 5-carboxymethylaminomethyl modification enzyme MnmG from Pediococcus pentosaceus (strain ATCC 25745 / CCUG 21536 / LMG 10740 / 183-1w).